The primary structure comprises 104 residues: Ig lambda-2 chain C region (104 aa).

Positions 6 to 99 (PTLTVFPPSS…EGDTVEKSLS (94 aa)) constitute an Ig-like domain. Residues cysteine 27 and cysteine 85 are joined by a disulfide bond.

This is Ig lambda-2 chain C region (Iglc2) from Mus musculus (Mouse).